Here is a 156-residue protein sequence, read N- to C-terminus: Hexachlorocyclohexane dehydrochlorinase 2 (156 aa).

Residue Asp-25 is part of the active site. His-73 (proton acceptor) is an active-site residue.

The protein belongs to the HCH dehydrochlorinase family. In terms of assembly, homotrimer.

The protein resides in the periplasm. It catalyses the reaction gamma-hexachlorocyclohexane = (3R,4S,5S,6R)-pentachlorocyclohexene + chloride + H(+). The catalysed reaction is (3R,4S,5S,6R)-pentachlorocyclohexene = (3R,6R)-1,3,4,6-tetrachlorocyclohexa-1,4-diene + chloride + H(+). It participates in xenobiotic degradation; hexachlorocyclohexane degradation. Functionally, catalyzes the conversion of the important environmental pollutant gamma-hexachlorocyclohexane (gamma-HCH or lindane) to 1,3,4,6-tetrachloro-1,4-cyclohexadiene (1,4-TCDN) via gamma-pentachlorocyclohexene (gamma-PCCH). Proceeds by two successive 1,2-anti conformationally dependent dehydrochlorinations. Also shows activity with alpha- and delta-HCH, giving alpha- and delta-PCCH respectively, but not with the beta isomer. The protein is Hexachlorocyclohexane dehydrochlorinase 2 of Sphingobium indicum (strain DSM 16412 / CCM 7286 / MTCC 6364 / B90A).